Reading from the N-terminus, the 420-residue chain is Threonine aspartase 1 (420 aa).

A disordered region spans residues 1-23 (MTMEKGMSSGEGLPSRSSQVSAG). Thr-234 serves as the catalytic Nucleophile.

This sequence belongs to the Ntn-hydrolase family. As to quaternary structure, intramolecular proteolysis generates 2 subunits, alpha and beta, which reassemble through a non-covalent association to form the fully active enzyme.

In terms of biological role, protease responsible for KMT2A/MLL1 processing and activation. It also activates KMT2D/MLL2. Through substrate activation, it controls the expression of HOXA genes, and the expression of key cell cycle regulators including CCNA1, CCNB1, CCNE1 and CDKN2A. The protein is Threonine aspartase 1 (TASP1) of Homo sapiens (Human).